Consider the following 301-residue polypeptide: NADH-cytochrome b5 reductase 3 (301 aa).

G2 carries the N-myristoyl glycine lipid modification. An FAD-binding FR-type domain is found at 40-152 (DIKYPLRLID…RGPNGLLVYQ (113 aa)). Residue K42 is modified to N6-acetyllysine. Y43 is subject to Phosphotyrosine. K50 carries the N6-acetyllysine modification. 6 residues coordinate FAD: R92, P93, Y94, V109, K111, and F114. K120 carries the post-translational modification N6-acetyllysine. The FAD site is built by K126, M127, S128, and T185.

Belongs to the flavoprotein pyridine nucleotide cytochrome reductase family. In terms of assembly, component of a complex composed of cytochrome b5, NADH-cytochrome b5 reductase (CYB5R3) and MTARC2. Interacts with MTLN; the interaction is required to maintain cellular lipid composition and leads to stimulation of mitochondrial respiratory complex I activity. It depends on FAD as a cofactor. Post-translationally, myristoylated. In terms of tissue distribution, ubiquitously expressed. Expressed only in erythroid tissues, reticulocytes and liver.

It is found in the endoplasmic reticulum membrane. The protein localises to the mitochondrion outer membrane. Its subcellular location is the cytoplasm. It catalyses the reaction 2 Fe(III)-[cytochrome b5] + NADH = 2 Fe(II)-[cytochrome b5] + NAD(+) + H(+). In terms of biological role, catalyzes the reduction of two molecules of cytochrome b5 using NADH as the electron donor. The protein is NADH-cytochrome b5 reductase 3 of Rattus norvegicus (Rat).